The chain runs to 116 residues: Large ribosomal subunit protein bL17 (116 aa).

It belongs to the bacterial ribosomal protein bL17 family. Part of the 50S ribosomal subunit. Contacts protein L32.

The sequence is that of Large ribosomal subunit protein bL17 from Synechococcus elongatus (strain ATCC 33912 / PCC 7942 / FACHB-805) (Anacystis nidulans R2).